A 384-amino-acid polypeptide reads, in one-letter code: BarH-like 2 homeobox protein (384 aa).

3 disordered regions span residues 1–134 (MTAM…APRT), 154–235 (CAPY…ARTA), and 364–384 (PGGQPALNPLSNPIPGTPHPR). Composition is skewed to low complexity over residues 101–110 (VPAQSLQPSP) and 119–134 (QSAAQQLGSAAAAPRT). A compositionally biased stretch (polar residues) spans 157 to 175 (YSTSVSSPHHTPKQESNAA). A compositionally biased stretch (basic and acidic residues) spans 177–217 (ESFRPKLEQEDGKTKLDKREDPQSDIKCHGTKEEGDREITS). The segment at residues 229 to 288 (PRKARTAFSDHQLNQLERSFERQKYLSVQDRMDLAAALNLTDTQVKTWYQNRRTKWKRQT) is a DNA-binding region (homeobox).

The protein belongs to the BAR homeobox family.

Its subcellular location is the nucleus. In terms of biological role, potential regulator of neural basic helix-loop-helix genes. It may down-regulate expression of ASCL1 and, within the thalamus, up-regulate NGN2, thereby regulating distinct patterns of neuronal differentiation. In Mus musculus (Mouse), this protein is BarH-like 2 homeobox protein (Barhl2).